A 207-amino-acid polypeptide reads, in one-letter code: Large ribosomal subunit protein uL4 (207 aa).

The interval 45-78 (RQGTHAVKNRSAVRGGGRKPWRQKGTGRARQGSI) is disordered. Positions 60 to 71 (GGRKPWRQKGTG) are enriched in basic residues.

It belongs to the universal ribosomal protein uL4 family. In terms of assembly, part of the 50S ribosomal subunit.

One of the primary rRNA binding proteins, this protein initially binds near the 5'-end of the 23S rRNA. It is important during the early stages of 50S assembly. It makes multiple contacts with different domains of the 23S rRNA in the assembled 50S subunit and ribosome. Functionally, forms part of the polypeptide exit tunnel. This is Large ribosomal subunit protein uL4 from Pediococcus pentosaceus (strain ATCC 25745 / CCUG 21536 / LMG 10740 / 183-1w).